We begin with the raw amino-acid sequence, 86 residues long: Serine protease inhibitor Kazal-type 4 (86 aa).

The N-terminal stretch at 1–26 (MAMHLWLVTLTLVPLLGMDRELMVSA) is a signal peptide. Residues 31–86 (FPRMPFCEHMAELPNCPQTPNLICGTDGLTYENECHLCLTRMKTMKDIQIMKDGQC) enclose the Kazal-like domain. 3 disulfide bridges follow: Cys37/Cys68, Cys46/Cys65, and Cys54/Cys86.

Expressed in the intestinal tract.

Its subcellular location is the secreted. This Mus musculus (Mouse) protein is Serine protease inhibitor Kazal-type 4 (Spink4).